The chain runs to 1461 residues: Gag-Pro-Pol polyprotein (1461 aa).

Gly2 carries the N-myristoyl glycine; by host lipid modification. The PTAP/PSAP motif signature appears at 94-97 (PSAP). Residues 94–121 (PSAPAAPVPTPICPTTTPPPPPPPSPEA) form a disordered region. A compositionally biased stretch (pro residues) spans 97-121 (PAAPVPTPICPTTTPPPPPPPSPEA). Positions 124–127 (PPPY) match the PPXY motif motif. A PTAP/PSAP motif motif is present at residues 130-133 (PTTT). CCHC-type zinc fingers lie at residues 361–378 (QPCF…DCTQ) and 384–401 (GPCP…DCPQ). The segment at 399–425 (CPQLKPPQEEGEPLLLDLPSTSGTTEE) is disordered. The region spanning 473–551 (TQALLDTGAD…NKWTIIGRDA (79 aa)) is the Peptidase A2 domain. Asp478 (for protease activity; shared with dimeric partner) is an active-site residue. One can recognise a Reverse transcriptase domain in the interval 612 to 802 (LEAGHIEPYS…GQIRFLGQVI (191 aa)). The Mg(2+) site is built by Asp678, Asp753, Asp754, Asp1038, Glu1073, Asp1095, Asp1156, Asp1229, and Asp1286. In terms of domain architecture, RNase H type-1 spans 1029-1164 (LDTAPCLFSD…TDSLILAPLV (136 aa)). Positions 1218 to 1387 (RGLLPNHIWQ…PPIPEASTPP (170 aa)) constitute an Integrase catalytic domain. Positions 1392 to 1441 (KWFYYKLPGLTNQRWKGPLQSLQEAAGAALLSIDGSPRWIPWRFLKKAAC) form a DNA-binding region, integrase-type.

In terms of assembly, homodimer; the homodimers are part of the immature particles. Interacts with human TSG101 and NEDD4; these interactions are essential for budding and release of viral particles. Homodimer; further assembles as homohexamers. Mg(2+) is required as a cofactor. In terms of processing, phosphorylation of the matrix protein p19 by MAPK1 seems to play a role in budding. Myristoylated. Myristoylation of the matrix (MA) domain mediates the transport and binding of Gag polyproteins to the host plasma membrane and is required for the assembly of viral particles. Post-translationally, specific enzymatic cleavages by the viral protease yield mature proteins. The polyprotein is cleaved during and after budding, this process is termed maturation. The protease is autoproteolytically processed at its N- and C-termini.

The protein localises to the virion. The enzyme catalyses Endonucleolytic cleavage to 5'-phosphomonoester.. It catalyses the reaction DNA(n) + a 2'-deoxyribonucleoside 5'-triphosphate = DNA(n+1) + diphosphate. Functionally, the matrix domain targets Gag, Gag-Pro and Gag-Pro-Pol polyproteins to the plasma membrane via a multipartite membrane binding signal, that includes its myristoylated N-terminus. Its function is as follows. Matrix protein. Forms the spherical core of the virus that encapsulates the genomic RNA-nucleocapsid complex. In terms of biological role, binds strongly to viral nucleic acids and promote their aggregation. Also destabilizes the nucleic acids duplexes via highly structured zinc-binding motifs. Functionally, the aspartyl protease mediates proteolytic cleavages of Gag and Gag-Pol polyproteins during or shortly after the release of the virion from the plasma membrane. Cleavages take place as an ordered, step-wise cascade to yield mature proteins. This process is called maturation. Displays maximal activity during the budding process just prior to particle release from the cell (Potential). Cleaves the translation initiation factor eIF4G leading to the inhibition of host cap-dependent translation. Its function is as follows. RT is a multifunctional enzyme that converts the viral RNA genome into dsDNA in the cytoplasm, shortly after virus entry into the cell. This enzyme displays a DNA polymerase activity that can copy either DNA or RNA templates, and a ribonuclease H (RNase H) activity that cleaves the RNA strand of RNA-DNA heteroduplexes in a partially processive 3' to 5'-endonucleasic mode. Conversion of viral genomic RNA into dsDNA requires many steps. A tRNA-Pro binds to the primer-binding site (PBS) situated at the 5'-end of the viral RNA. RT uses the 3' end of the tRNA primer to perform a short round of RNA-dependent minus-strand DNA synthesis. The reading proceeds through the U5 region and ends after the repeated (R) region which is present at both ends of viral RNA. The portion of the RNA-DNA heteroduplex is digested by the RNase H, resulting in a ssDNA product attached to the tRNA primer. This ssDNA/tRNA hybridizes with the identical R region situated at the 3' end of viral RNA. This template exchange, known as minus-strand DNA strong stop transfer, can be either intra- or intermolecular. RT uses the 3' end of this newly synthesized short ssDNA to perform the RNA-dependent minus-strand DNA synthesis of the whole template. RNase H digests the RNA template except for a polypurine tract (PPT) situated at the 5' end of the genome. It is not clear if both polymerase and RNase H activities are simultaneous. RNase H probably can proceed both in a polymerase-dependent (RNA cut into small fragments by the same RT performing DNA synthesis) and a polymerase-independent mode (cleavage of remaining RNA fragments by free RTs). Secondly, RT performs DNA-directed plus-strand DNA synthesis using the PPT that has not been removed by RNase H as primer. PPT and tRNA primers are then removed by RNase H. The 3' and 5' ssDNA PBS regions hybridize to form a circular dsDNA intermediate. Strand displacement synthesis by RT to the PBS and PPT ends produces a blunt ended, linear dsDNA copy of the viral genome that includes long terminal repeats (LTRs) at both ends. Catalyzes viral DNA integration into the host chromosome, by performing a series of DNA cutting and joining reactions. This is Gag-Pro-Pol polyprotein (gag-pro-pol) from Human T-cell leukemia virus 2 (HTLV-2).